Consider the following 249-residue polypeptide: Uroplakin-3b-like protein 1 (249 aa).

Residues 1–26 form the signal peptide; sequence MGPHGKQSVLRMPLLLLLTCVQSGTG. Over 27–194 the chain is Extracellular; the sequence is LESINYAPQL…PGSQGKGTVV (168 aa). N-linked (GlcNAc...) asparagine glycosylation is found at asparagine 63, asparagine 82, and asparagine 133. The helical transmembrane segment at 195 to 215 threads the bilayer; that stretch reads IIAFLSILLAILLVVFLVLVI. Topologically, residues 216-249 are cytoplasmic; that stretch reads SACLSTSGSSPEEQVRMRHYHTHHMGSLRAERSS.

Belongs to the uroplakin-3 family.

The protein resides in the membrane. The protein is Uroplakin-3b-like protein 1 of Mus musculus (Mouse).